Here is a 686-residue protein sequence, read N- to C-terminus: Cadmium, zinc and cobalt-transporting ATPase (686 aa).

The region spanning methionine 1–serine 62 is the HMA domain. The Cytoplasmic portion of the chain corresponds to methionine 1 to proline 72. Cd(2+) contacts are provided by cysteine 11 and cysteine 14. 2 residues coordinate Co(2+): cysteine 11 and cysteine 14. Residues cysteine 11 and cysteine 14 each coordinate Zn(2+). The helical transmembrane segment at leucine 73–leucine 92 threads the bilayer. Topologically, residues histidine 93–lysine 102 are extracellular. Residues alanine 103–phenylalanine 124 form a helical membrane-spanning segment. At arginine 125 to glutamine 131 the chain is on the cytoplasmic side. Residues phenylalanine 132–alanine 151 form a helical membrane-spanning segment. At tyrosine 152–glutamate 154 the chain is on the extracellular side. The helical transmembrane segment at serine 155–serine 174 threads the bilayer. The Cytoplasmic segment spans residues arginine 175–proline 308. A helical transmembrane segment spans residues serine 309 to glycine 327. Topologically, residues serine 328–tryptophan 332 are extracellular. A helical membrane pass occupies residues isoleucine 333–isoleucine 350. At serine 351–serine 635 the chain is on the cytoplasmic side. The active-site 4-aspartylphosphate intermediate is the aspartate 388. 2 residues coordinate Mg(2+): aspartate 583 and aspartate 587. Residues isoleucine 636 to methionine 657 traverse the membrane as a helical segment. At glycine 658–alanine 665 the chain is on the extracellular side. A helical transmembrane segment spans residues valine 666–methionine 681. Topologically, residues arginine 682–alanine 686 are cytoplasmic.

It belongs to the cation transport ATPase (P-type) (TC 3.A.3) family. Type IB subfamily.

It is found in the cell membrane. The enzyme catalyses Zn(2+)(in) + ATP + H2O = Zn(2+)(out) + ADP + phosphate + H(+). The catalysed reaction is Cd(2+)(in) + ATP + H2O = Cd(2+)(out) + ADP + phosphate + H(+). Couples the hydrolysis of ATP with the transport of cadmium, zinc and cobalt out of the cell. This ion efflux may influence the activity of urease, which is essential for the survival of the bacterium in the gastric environment. This is Cadmium, zinc and cobalt-transporting ATPase (cadA) from Helicobacter pylori (strain ATCC 700392 / 26695) (Campylobacter pylori).